We begin with the raw amino-acid sequence, 493 residues long: Glutamyl-tRNA(Gln) amidotransferase subunit A (493 aa).

Active-site charge relay system residues include lysine 78 and serine 158. Catalysis depends on serine 182, which acts as the Acyl-ester intermediate.

The protein belongs to the amidase family. GatA subfamily. As to quaternary structure, heterotrimer of A, B and C subunits.

The catalysed reaction is L-glutamyl-tRNA(Gln) + L-glutamine + ATP + H2O = L-glutaminyl-tRNA(Gln) + L-glutamate + ADP + phosphate + H(+). Its function is as follows. Allows the formation of correctly charged Gln-tRNA(Gln) through the transamidation of misacylated Glu-tRNA(Gln) in organisms which lack glutaminyl-tRNA synthetase. The reaction takes place in the presence of glutamine and ATP through an activated gamma-phospho-Glu-tRNA(Gln). The protein is Glutamyl-tRNA(Gln) amidotransferase subunit A of Rickettsia africae (strain ESF-5).